A 176-amino-acid polypeptide reads, in one-letter code: Replication restart protein PriC (176 aa).

Belongs to the PriC family. Component of the replication restart primosome, which is composed of PriA, PriB, PriC, DnaB and DnaT; DnaG primase associates transiently with this complex. Interacts with the C-terminus of SSB; this interaction is required to load the main replicative helicase onto substrate replication forks. Interacts with helicase DnaB alone and in the DnaB-DnaC complex, probably 1:1 binding with DnaB. Interacts with DnaT.

In terms of biological role, involved in the restart of stalled replication forks, which reloads the DnaB replicative helicase on sites other than the origin of replication. Recognizes abandoned replication forks and remodels DNA single-stranded binding protein (SSB) on ssDNA to uncover a loading site for DnaB. There are several restart pathways, the PriA-PriC pathway is a minor restart pathway. Part of the minor PriC-Rep pathway for restart of stalled replication forks, which has a different substrate specificity than PriA. Part of the major restart pathway with PriA, PriB, DnaB, DnaT and DnaG primase. priB and priC have redundant roles in the cell. Binds 7-9 nucleotides of single-stranded (ss)DNA. This Klebsiella pneumoniae subsp. pneumoniae (strain ATCC 700721 / MGH 78578) protein is Replication restart protein PriC.